Consider the following 334-residue polypeptide: Holliday junction branch migration complex subunit RuvB (334 aa).

The tract at residues 4 to 184 (ADRLIQPQDL…FGIPLRLEFY (181 aa)) is large ATPase domain (RuvB-L). ATP-binding positions include arginine 24, glycine 65, lysine 68, threonine 69, threonine 70, 131-133 (EDY), arginine 174, tyrosine 184, and arginine 221. Threonine 69 serves as a coordination point for Mg(2+). Residues 185–255 (NVRDLSSIVA…VAQSALDLLD (71 aa)) are small ATPAse domain (RuvB-S). A head domain (RuvB-H) region spans residues 258–334 (SEGFDYMDRK…YSHFDLIKPD (77 aa)). DNA-binding residues include arginine 294, arginine 313, and arginine 318.

It belongs to the RuvB family. As to quaternary structure, homohexamer. Forms an RuvA(8)-RuvB(12)-Holliday junction (HJ) complex. HJ DNA is sandwiched between 2 RuvA tetramers; dsDNA enters through RuvA and exits via RuvB. An RuvB hexamer assembles on each DNA strand where it exits the tetramer. Each RuvB hexamer is contacted by two RuvA subunits (via domain III) on 2 adjacent RuvB subunits; this complex drives branch migration. In the full resolvosome a probable DNA-RuvA(4)-RuvB(12)-RuvC(2) complex forms which resolves the HJ.

It localises to the cytoplasm. It catalyses the reaction ATP + H2O = ADP + phosphate + H(+). In terms of biological role, the RuvA-RuvB-RuvC complex processes Holliday junction (HJ) DNA during genetic recombination and DNA repair, while the RuvA-RuvB complex plays an important role in the rescue of blocked DNA replication forks via replication fork reversal (RFR). RuvA specifically binds to HJ cruciform DNA, conferring on it an open structure. The RuvB hexamer acts as an ATP-dependent pump, pulling dsDNA into and through the RuvAB complex. RuvB forms 2 homohexamers on either side of HJ DNA bound by 1 or 2 RuvA tetramers; 4 subunits per hexamer contact DNA at a time. Coordinated motions by a converter formed by DNA-disengaged RuvB subunits stimulates ATP hydrolysis and nucleotide exchange. Immobilization of the converter enables RuvB to convert the ATP-contained energy into a lever motion, pulling 2 nucleotides of DNA out of the RuvA tetramer per ATP hydrolyzed, thus driving DNA branch migration. The RuvB motors rotate together with the DNA substrate, which together with the progressing nucleotide cycle form the mechanistic basis for DNA recombination by continuous HJ branch migration. Branch migration allows RuvC to scan DNA until it finds its consensus sequence, where it cleaves and resolves cruciform DNA. The protein is Holliday junction branch migration complex subunit RuvB of Shewanella amazonensis (strain ATCC BAA-1098 / SB2B).